The following is a 478-amino-acid chain: ATP synthase subunit beta (478 aa).

Position 158–165 (158–165 (GGAGVGKT)) interacts with ATP.

The protein belongs to the ATPase alpha/beta chains family. As to quaternary structure, F-type ATPases have 2 components, CF(1) - the catalytic core - and CF(0) - the membrane proton channel. CF(1) has five subunits: alpha(3), beta(3), gamma(1), delta(1), epsilon(1). CF(0) has three main subunits: a(1), b(2) and c(9-12). The alpha and beta chains form an alternating ring which encloses part of the gamma chain. CF(1) is attached to CF(0) by a central stalk formed by the gamma and epsilon chains, while a peripheral stalk is formed by the delta and b chains.

The protein resides in the cell inner membrane. It carries out the reaction ATP + H2O + 4 H(+)(in) = ADP + phosphate + 5 H(+)(out). Functionally, produces ATP from ADP in the presence of a proton gradient across the membrane. The catalytic sites are hosted primarily by the beta subunits. The polypeptide is ATP synthase subunit beta (Rhizobium leguminosarum bv. trifolii (strain WSM2304)).